The primary structure comprises 248 residues: Tyrosine recombinase XerD-like (248 aa).

In terms of domain architecture, Core-binding (CB) spans 1–72; it reads MIAFIEPFLA…TVNQFLYYLY (72 aa). The Tyr recombinase domain maps to 92-248; that stretch reads SLKPQLTRLD…PITLEKYYKM (157 aa). Arg-213 is a catalytic residue. Tyr-245 functions as the O-(3'-phospho-DNA)-tyrosine intermediate in the catalytic mechanism.

The protein belongs to the 'phage' integrase family. XerD-like subfamily.

The protein localises to the cytoplasm. Functionally, putative tyrosine recombinase. Not involved in the cutting and rejoining of the recombining DNA molecules on dif(SL) site. The protein is Tyrosine recombinase XerD-like of Streptococcus equi subsp. zooepidemicus (strain MGCS10565).